A 132-amino-acid polypeptide reads, in one-letter code: Fatty acid-binding protein, adipocyte (132 aa).

At Cys2 the chain carries N-acetylcysteine. Ser13 carries the phosphoserine modification. The residue at position 20 (Tyr20) is a Phosphotyrosine; by Tyr-kinases. The Nuclear localization signal signature appears at 22-32 (KEVGVGFATRK). Residue 127-129 (RVY) participates in a fatty acid binding.

It belongs to the calycin superfamily. Fatty-acid binding protein (FABP) family. As to quaternary structure, monomer. Homodimer. Interacts with PPARG.

Its subcellular location is the cytoplasm. The protein resides in the nucleus. In terms of biological role, lipid transport protein in adipocytes. Binds both long chain fatty acids and retinoic acid. Delivers long-chain fatty acids and retinoic acid to their cognate receptors in the nucleus. This is Fatty acid-binding protein, adipocyte (Fabp4) from Rattus norvegicus (Rat).